The following is a 673-amino-acid chain: UvrABC system protein B (673 aa).

The 158-residue stretch at Glu-26–Arg-183 folds into the Helicase ATP-binding domain. Gly-39–Thr-46 is an ATP binding site. The Beta-hairpin signature appears at Tyr-92–Val-115. Residues Gln-431–Leu-597 form the Helicase C-terminal domain. The disordered stretch occupies residues Ala-608–Met-627. Residues Gln-633 to Leu-668 form the UVR domain.

Belongs to the UvrB family. In terms of assembly, forms a heterotetramer with UvrA during the search for lesions. Interacts with UvrC in an incision complex.

The protein resides in the cytoplasm. Functionally, the UvrABC repair system catalyzes the recognition and processing of DNA lesions. A damage recognition complex composed of 2 UvrA and 2 UvrB subunits scans DNA for abnormalities. Upon binding of the UvrA(2)B(2) complex to a putative damaged site, the DNA wraps around one UvrB monomer. DNA wrap is dependent on ATP binding by UvrB and probably causes local melting of the DNA helix, facilitating insertion of UvrB beta-hairpin between the DNA strands. Then UvrB probes one DNA strand for the presence of a lesion. If a lesion is found the UvrA subunits dissociate and the UvrB-DNA preincision complex is formed. This complex is subsequently bound by UvrC and the second UvrB is released. If no lesion is found, the DNA wraps around the other UvrB subunit that will check the other stand for damage. This chain is UvrABC system protein B, found in Escherichia fergusonii (strain ATCC 35469 / DSM 13698 / CCUG 18766 / IAM 14443 / JCM 21226 / LMG 7866 / NBRC 102419 / NCTC 12128 / CDC 0568-73).